An 88-amino-acid chain; its full sequence is Large ribosomal subunit protein bL27 (88 aa).

It belongs to the bacterial ribosomal protein bL27 family.

In Parabacteroides distasonis (strain ATCC 8503 / DSM 20701 / CIP 104284 / JCM 5825 / NCTC 11152), this protein is Large ribosomal subunit protein bL27.